A 311-amino-acid polypeptide reads, in one-letter code: Methionyl-tRNA formyltransferase (311 aa).

109-112 is a (6S)-5,6,7,8-tetrahydrofolate binding site; the sequence is SLLP.

It belongs to the Fmt family.

It carries out the reaction L-methionyl-tRNA(fMet) + (6R)-10-formyltetrahydrofolate = N-formyl-L-methionyl-tRNA(fMet) + (6S)-5,6,7,8-tetrahydrofolate + H(+). In terms of biological role, attaches a formyl group to the free amino group of methionyl-tRNA(fMet). The formyl group appears to play a dual role in the initiator identity of N-formylmethionyl-tRNA by promoting its recognition by IF2 and preventing the misappropriation of this tRNA by the elongation apparatus. The protein is Methionyl-tRNA formyltransferase of Staphylococcus aureus (strain USA300).